Consider the following 228-residue polypeptide: 2-C-methyl-D-erythritol 4-phosphate cytidylyltransferase (228 aa).

The protein belongs to the IspD/TarI cytidylyltransferase family. IspD subfamily.

The catalysed reaction is 2-C-methyl-D-erythritol 4-phosphate + CTP + H(+) = 4-CDP-2-C-methyl-D-erythritol + diphosphate. It participates in isoprenoid biosynthesis; isopentenyl diphosphate biosynthesis via DXP pathway; isopentenyl diphosphate from 1-deoxy-D-xylulose 5-phosphate: step 2/6. Functionally, catalyzes the formation of 4-diphosphocytidyl-2-C-methyl-D-erythritol from CTP and 2-C-methyl-D-erythritol 4-phosphate (MEP). In Dechloromonas aromatica (strain RCB), this protein is 2-C-methyl-D-erythritol 4-phosphate cytidylyltransferase.